The sequence spans 429 residues: uncharacterized protein (429 aa).

11 consecutive transmembrane segments (helical) span residues 27–47 (PFFFLFCLFIPFDNTSLQSIG), 48–68 (GIMTASPSALILLPGLFVSIL), 78–98 (ILLCFFGVLLISFLYYFYWVF), 106–126 (IFILDRGSRYFLLYVFYFLAL), 142–162 (ALIIIVVIFSVLLNYLDPAII), 198–218 (LLLAVLLNWSTFFLVTVTIVI), 219–239 (AILTTSKGAALSFLICICFYF), 249–269 (VLLSLCSIVISYIIFKYYFLD), 288–308 (FIVGLKIFLFNPLGVGFFGYL), 351–371 (LILDLLIIYGVFFLIPFIYFI), and 399–419 (FFISHLGSYFTPFCIAFLIIL).

It is found in the cell membrane. May function as a transporter. This is an uncharacterized protein from Klebsiella pneumoniae.